The chain runs to 112 residues: UPF0251 protein MA_4245 (112 aa).

It belongs to the UPF0251 family.

This chain is UPF0251 protein MA_4245, found in Methanosarcina acetivorans (strain ATCC 35395 / DSM 2834 / JCM 12185 / C2A).